The sequence spans 462 residues: Spermatogenesis- and oogenesis-specific basic helix-loop-helix-containing protein 2 (462 aa).

One can recognise a bHLH domain in the interval 200 to 251 (KASFLHSSKEKLRRERIKFCCEQLRTLLPYVKGRKSDVASVIEATVDYVKQV). Residues 422 to 462 (PASSRTASSSIFRGFRESDSGHQASQQPTGPSLQPQDSSYF) are disordered. Residues 442 to 462 (GHQASQQPTGPSLQPQDSSYF) are compositionally biased toward polar residues.

The protein localises to the nucleus. Probable transcription factor, which may be involved in spermatogenesis and oogenesis. The sequence is that of Spermatogenesis- and oogenesis-specific basic helix-loop-helix-containing protein 2 (Sohlh2) from Rattus norvegicus (Rat).